Reading from the N-terminus, the 1140-residue chain is Centrosomal protein of 135 kDa (1140 aa).

The interval 11 to 64 (NIRKRLDQLGYRQTLTVECLPLVEKLFSDLVHTTESLRQSKLSAVKAEKESANF) is homodimerization. Coiled coils occupy residues 75–151 (NARL…KNLH) and 199–416 (LQVA…FAVT). Residues serine 383 and serine 439 each carry the phosphoserine modification. Coiled coils occupy residues 447 to 644 (LKGI…LENK), 668 to 1036 (SLRI…LESL), and 1079 to 1113 (NTML…AIQE). Serine 688 bears the Phosphoserine mark. A disordered region spans residues 1114-1140 (MRRHGLATPPLSSTLRSPSHSPEHRNV). Threonine 1121 carries the post-translational modification Phosphothreonine. The segment covering 1121–1133 (TPPLSSTLRSPSH) has biased composition (low complexity). Serine 1130 carries the post-translational modification Phosphoserine.

Belongs to the CEP135/TSGA10 family. Homodimer. Interacts with DCTN2. Interacts with CEP250.

Its subcellular location is the cytoplasm. The protein localises to the cytoskeleton. It localises to the microtubule organizing center. It is found in the centrosome. The protein resides in the centriole. In terms of biological role, centrosomal microtubule-binding protein involved in centriole biogenesis. Acts as a scaffolding protein during early centriole biogenesis. Required for the targeting of centriole satellite proteins to centrosomes such as of PCM1, SSX2IP and CEP290 and recruitment of WRAP73 to centrioles. Also required for centriole-centriole cohesion during interphase by acting as a platform protein for CEP250 at the centriole. Required for the recruitment of CEP295 to the proximal end of new-born centrioles at the centriolar microtubule wall during early S phase in a PLK4-dependent manner. This is Centrosomal protein of 135 kDa from Homo sapiens (Human).